A 400-amino-acid polypeptide reads, in one-letter code: Argininosuccinate synthase (400 aa).

Residues 10–18 and A38 each bind ATP; that span reads AYSGGVDTS. Residue Y89 participates in L-citrulline binding. ATP is bound at residue G119. Residues T121, N125, and D126 each coordinate L-aspartate. N125 contacts L-citrulline. Residues R129, S177, S186, E262, and Y274 each coordinate L-citrulline.

The protein belongs to the argininosuccinate synthase family. Type 1 subfamily. In terms of assembly, homotetramer.

The protein localises to the cytoplasm. It catalyses the reaction L-citrulline + L-aspartate + ATP = 2-(N(omega)-L-arginino)succinate + AMP + diphosphate + H(+). The protein operates within amino-acid biosynthesis; L-arginine biosynthesis; L-arginine from L-ornithine and carbamoyl phosphate: step 2/3. This is Argininosuccinate synthase from Prochlorococcus marinus (strain NATL2A).